We begin with the raw amino-acid sequence, 313 residues long: Aspartate carbamoyltransferase catalytic subunit (313 aa).

Positions 58 and 59 each coordinate carbamoyl phosphate. Lys-86 provides a ligand contact to L-aspartate. Carbamoyl phosphate-binding residues include Arg-108, His-136, and Gln-139. Arg-169 and Arg-223 together coordinate L-aspartate. Residues Gly-265 and Pro-266 each coordinate carbamoyl phosphate.

Belongs to the aspartate/ornithine carbamoyltransferase superfamily. ATCase family. In terms of assembly, heterododecamer (2C3:3R2) of six catalytic PyrB chains organized as two trimers (C3), and six regulatory PyrI chains organized as three dimers (R2).

The catalysed reaction is carbamoyl phosphate + L-aspartate = N-carbamoyl-L-aspartate + phosphate + H(+). It participates in pyrimidine metabolism; UMP biosynthesis via de novo pathway; (S)-dihydroorotate from bicarbonate: step 2/3. Functionally, catalyzes the condensation of carbamoyl phosphate and aspartate to form carbamoyl aspartate and inorganic phosphate, the committed step in the de novo pyrimidine nucleotide biosynthesis pathway. The protein is Aspartate carbamoyltransferase catalytic subunit of Anaeromyxobacter dehalogenans (strain 2CP-C).